Consider the following 45-residue polypeptide: Omega-hexatoxin-Hv2a (45 aa).

3 disulfides stabilise this stretch: C4/C18, C11/C24, and C17/C29.

It belongs to the neurotoxin 15 family. 02 (omega-actx) subfamily. As to expression, expressed by the venom gland.

It is found in the secreted. Functionally, potent inhibitor of insect (bee brain), but not mammalian (rat trigeminal neurons), voltage-gated calcium channels (Cav). In vivo, injection into lone star ticks (Amblyomma americanum) induces curling of all eight legs into closed loops, followed by death. This is Omega-hexatoxin-Hv2a from Hadronyche versuta (Blue mountains funnel-web spider).